Here is a 215-residue protein sequence, read N- to C-terminus: Thiamine-phosphate synthase (215 aa).

4-amino-2-methyl-5-(diphosphooxymethyl)pyrimidine contacts are provided by residues 37–41 and Asn69; that span reads QLRIK. 2 residues coordinate Mg(2+): Asp70 and Asp89. A 4-amino-2-methyl-5-(diphosphooxymethyl)pyrimidine-binding site is contributed by Ser108. 2-[(2R,5Z)-2-carboxy-4-methylthiazol-5(2H)-ylidene]ethyl phosphate is bound at residue 134–136; the sequence is TQT. Residue Lys137 coordinates 4-amino-2-methyl-5-(diphosphooxymethyl)pyrimidine. 2-[(2R,5Z)-2-carboxy-4-methylthiazol-5(2H)-ylidene]ethyl phosphate contacts are provided by residues Gly166 and 186-187; that span reads VS.

It belongs to the thiamine-phosphate synthase family. Mg(2+) is required as a cofactor.

The enzyme catalyses 2-[(2R,5Z)-2-carboxy-4-methylthiazol-5(2H)-ylidene]ethyl phosphate + 4-amino-2-methyl-5-(diphosphooxymethyl)pyrimidine + 2 H(+) = thiamine phosphate + CO2 + diphosphate. It carries out the reaction 2-(2-carboxy-4-methylthiazol-5-yl)ethyl phosphate + 4-amino-2-methyl-5-(diphosphooxymethyl)pyrimidine + 2 H(+) = thiamine phosphate + CO2 + diphosphate. The catalysed reaction is 4-methyl-5-(2-phosphooxyethyl)-thiazole + 4-amino-2-methyl-5-(diphosphooxymethyl)pyrimidine + H(+) = thiamine phosphate + diphosphate. It participates in cofactor biosynthesis; thiamine diphosphate biosynthesis; thiamine phosphate from 4-amino-2-methyl-5-diphosphomethylpyrimidine and 4-methyl-5-(2-phosphoethyl)-thiazole: step 1/1. Functionally, condenses 4-methyl-5-(beta-hydroxyethyl)thiazole monophosphate (THZ-P) and 2-methyl-4-amino-5-hydroxymethyl pyrimidine pyrophosphate (HMP-PP) to form thiamine monophosphate (TMP). This Yersinia pestis (strain Pestoides F) protein is Thiamine-phosphate synthase.